The primary structure comprises 136 residues: MAEPRRGDLWLVSLGAARAGEPGKHRPAVVVSVDELLTGIDDELVVVVPVSSSRSRTPLRPPVAPSEGVAADSVAVCRGVRAVARARLVERLGALKPATMRAIENALTLILGLPTGPERGEAATHSPVRWTGGRDP.

Positions 115–136 (TGPERGEAATHSPVRWTGGRDP) are disordered.

This sequence belongs to the PemK/MazF family. As to quaternary structure, forms a complex with cognate antitoxin MazE7.

In terms of biological role, toxic component of a type II toxin-antitoxin (TA) system. Upon expression in E.coli and M.smegmatis inhibits cell growth and colony formation. Its toxic effect is neutralized by coexpression with cognate antitoxin MazE7. Probably an endoribonuclease. In Mycobacterium tuberculosis (strain ATCC 25618 / H37Rv), this protein is Probable endoribonuclease MazF7 (mazF7).